We begin with the raw amino-acid sequence, 322 residues long: Pantothenate kinase (322 aa).

100-107 (GSVAVGKS) is a binding site for ATP.

This sequence belongs to the prokaryotic pantothenate kinase family.

It localises to the cytoplasm. The catalysed reaction is (R)-pantothenate + ATP = (R)-4'-phosphopantothenate + ADP + H(+). The protein operates within cofactor biosynthesis; coenzyme A biosynthesis; CoA from (R)-pantothenate: step 1/5. The chain is Pantothenate kinase from Agrobacterium fabrum (strain C58 / ATCC 33970) (Agrobacterium tumefaciens (strain C58)).